Consider the following 498-residue polypeptide: Glycerol kinase (498 aa).

Threonine 12 contributes to the ADP binding site. ATP is bound by residues threonine 12, threonine 13, and serine 14. Threonine 12 lines the sn-glycerol 3-phosphate pocket. An ADP-binding site is contributed by arginine 16. Sn-glycerol 3-phosphate is bound by residues arginine 82, glutamate 83, and tyrosine 134. Residues arginine 82, glutamate 83, and tyrosine 134 each contribute to the glycerol site. Histidine 230 carries the phosphohistidine; by HPr modification. Sn-glycerol 3-phosphate is bound at residue aspartate 244. Aspartate 244 and glutamine 245 together coordinate glycerol. 2 residues coordinate ADP: threonine 266 and glycine 309. The ATP site is built by threonine 266, glycine 309, glutamine 313, and glycine 410. ADP-binding residues include glycine 410 and asparagine 414.

This sequence belongs to the FGGY kinase family. In terms of assembly, homotetramer and homodimer (in equilibrium). Post-translationally, the phosphoenolpyruvate-dependent sugar phosphotransferase system (PTS), including enzyme I, and histidine-containing protein (HPr) are required for the phosphorylation, which leads to the activation of the enzyme.

The enzyme catalyses glycerol + ATP = sn-glycerol 3-phosphate + ADP + H(+). It functions in the pathway polyol metabolism; glycerol degradation via glycerol kinase pathway; sn-glycerol 3-phosphate from glycerol: step 1/1. With respect to regulation, activated by phosphorylation and inhibited by fructose 1,6-bisphosphate (FBP). In terms of biological role, key enzyme in the regulation of glycerol uptake and metabolism. Catalyzes the phosphorylation of glycerol to yield sn-glycerol 3-phosphate. This is Glycerol kinase from Staphylococcus aureus (strain MW2).